The sequence spans 205 residues: uncharacterized protein (205 aa).

Belongs to the flavoredoxin family. It depends on FMN as a cofactor.

This is an uncharacterized protein from Bacillus subtilis (strain 168).